Reading from the N-terminus, the 205-residue chain is MIGKLKGVVDSFGEDFVILDVSGVGYIVHCSARTLQRMPKVGEPAELSIETHVREDMIRLYGFRSDAEREWFRLLQTVQGVGARVALGVLSVLEPEALASAIATGDKGSISRAPGVGPRLAARLAAELKDKAPAFAPVDPALVALAGAVEEGAAPQPVADAVSALVNLGYPQVQAAAAIAAALKGAGEGAEAKVLIRLGLRELAR.

The domain I stretch occupies residues 1-64; it reads MIGKLKGVVD…EDMIRLYGFR (64 aa). The interval 65 to 143 is domain II; it reads SDAEREWFRL…AFAPVDPALV (79 aa). A flexible linker region spans residues 144-152; it reads ALAGAVEEG. The domain III stretch occupies residues 153 to 205; that stretch reads AAPQPVADAVSALVNLGYPQVQAAAAIAAALKGAGEGAEAKVLIRLGLRELAR.

Belongs to the RuvA family. As to quaternary structure, homotetramer. Forms an RuvA(8)-RuvB(12)-Holliday junction (HJ) complex. HJ DNA is sandwiched between 2 RuvA tetramers; dsDNA enters through RuvA and exits via RuvB. An RuvB hexamer assembles on each DNA strand where it exits the tetramer. Each RuvB hexamer is contacted by two RuvA subunits (via domain III) on 2 adjacent RuvB subunits; this complex drives branch migration. In the full resolvosome a probable DNA-RuvA(4)-RuvB(12)-RuvC(2) complex forms which resolves the HJ.

It localises to the cytoplasm. Its function is as follows. The RuvA-RuvB-RuvC complex processes Holliday junction (HJ) DNA during genetic recombination and DNA repair, while the RuvA-RuvB complex plays an important role in the rescue of blocked DNA replication forks via replication fork reversal (RFR). RuvA specifically binds to HJ cruciform DNA, conferring on it an open structure. The RuvB hexamer acts as an ATP-dependent pump, pulling dsDNA into and through the RuvAB complex. HJ branch migration allows RuvC to scan DNA until it finds its consensus sequence, where it cleaves and resolves the cruciform DNA. This chain is Holliday junction branch migration complex subunit RuvA, found in Methylobacterium radiotolerans (strain ATCC 27329 / DSM 1819 / JCM 2831 / NBRC 15690 / NCIMB 10815 / 0-1).